A 1202-amino-acid chain; its full sequence is Putative late blight resistance protein homolog R1B-8 (1202 aa).

Coiled coils occupy residues 345–368 and 437–459; these read RYSD…ESLQ and LRMN…RLLN. The NB-ARC domain occupies 426-741; that stretch reads IARTSSQLAR…ISESFIKSCE (316 aa). 471-478 contacts ATP; that stretch reads GMPGLGKT. LRR repeat units lie at residues 865 to 889, 908 to 936, 1011 to 1036, 1040 to 1059, 1060 to 1084, 1086 to 1111, and 1128 to 1151; these read FKFL…LFYL, LWNL…VWDM, PIRL…ISAP, YLKL…TADH, LKHL…VSNG, FPQL…VFPN, and SCFM…VVQS.

This sequence belongs to the disease resistance NB-LRR family.

The protein localises to the cytoplasm. It localises to the membrane. Its function is as follows. Confers resistance to late blight (Phytophthora infestans) races carrying the avirulence gene Avr1. Resistance proteins guard the plant against pathogens that contain an appropriate avirulence protein via an indirect interaction with this avirulence protein. That triggers a defense system including the hypersensitive response, which restricts the pathogen growth. This chain is Putative late blight resistance protein homolog R1B-8 (R1B-8), found in Solanum demissum (Wild potato).